We begin with the raw amino-acid sequence, 855 residues long: Replication factor C small subunit (855 aa).

Positions 185–308 constitute a DOD-type homing endonuclease domain; it reads WLGYFLGGGY…IAYALAGFGI (124 aa).

It belongs to the activator 1 small subunits family. RfcS subfamily. Heteromultimer composed of small subunits (RfcS) and large subunits (RfcL). Post-translationally, this protein undergoes a protein self splicing that involves a post-translational excision of the intervening region (intein) followed by peptide ligation.

In terms of biological role, part of the RFC clamp loader complex which loads the PCNA sliding clamp onto DNA. The chain is Replication factor C small subunit (rfcS) from Pyrococcus horikoshii (strain ATCC 700860 / DSM 12428 / JCM 9974 / NBRC 100139 / OT-3).